A 127-amino-acid polypeptide reads, in one-letter code: Small ribosomal subunit protein uS11 (127 aa).

Belongs to the universal ribosomal protein uS11 family. In terms of assembly, part of the 30S ribosomal subunit. Interacts with proteins S7 and S18. Binds to IF-3.

In terms of biological role, located on the platform of the 30S subunit, it bridges several disparate RNA helices of the 16S rRNA. Forms part of the Shine-Dalgarno cleft in the 70S ribosome. The sequence is that of Small ribosomal subunit protein uS11 from Anaeromyxobacter dehalogenans (strain 2CP-C).